The following is a 461-amino-acid chain: Deoxyguanosinetriphosphate triphosphohydrolase-like protein (461 aa).

A disordered region spans residues 22–41 (ERFLPDPPREKDNRPPFRRD). A compositionally biased stretch (basic and acidic residues) spans 24-41 (FLPDPPREKDNRPPFRRD). The region spanning 72–285 (RLTHSLEVAQ…MELADDIAYG (214 aa)) is the HD domain.

It belongs to the dGTPase family. Type 2 subfamily.

The protein is Deoxyguanosinetriphosphate triphosphohydrolase-like protein of Haemophilus influenzae (strain PittEE).